The chain runs to 310 residues: Aspartate carbamoyltransferase catalytic subunit 2 (310 aa).

Arg55 and Thr56 together coordinate carbamoyl phosphate. Lys85 lines the L-aspartate pocket. 3 residues coordinate carbamoyl phosphate: Arg106, His134, and Gln137. Arg167 and Arg228 together coordinate L-aspartate. Positions 266 and 267 each coordinate carbamoyl phosphate.

It belongs to the aspartate/ornithine carbamoyltransferase superfamily. ATCase family. Heterododecamer (2C3:3R2) of six catalytic PyrB chains organized as two trimers (C3), and six regulatory PyrI chains organized as three dimers (R2).

It carries out the reaction carbamoyl phosphate + L-aspartate = N-carbamoyl-L-aspartate + phosphate + H(+). It functions in the pathway pyrimidine metabolism; UMP biosynthesis via de novo pathway; (S)-dihydroorotate from bicarbonate: step 2/3. Its function is as follows. Catalyzes the condensation of carbamoyl phosphate and aspartate to form carbamoyl aspartate and inorganic phosphate, the committed step in the de novo pyrimidine nucleotide biosynthesis pathway. In Shewanella halifaxensis (strain HAW-EB4), this protein is Aspartate carbamoyltransferase catalytic subunit 2.